A 470-amino-acid chain; its full sequence is Growth/differentiation factor 6 (470 aa).

Residues 1–22 form the signal peptide; it reads MDTSRVLLSAVFLISFLWDLPG. Positions 23 to 350 are excised as a propeptide; that stretch reads FQQASISSSS…SPSPGRRRRR (328 aa). The disordered stretch occupies residues 28 to 98; it reads ISSSSSSAEL…REPPGRGPRV (71 aa). Basic and acidic residues predominate over residues 45-80; it reads SRKEGRMPRAPRENATAREPLDRQEPPPRPQEEPQR. An N-linked (GlcNAc...) asparagine glycan is attached at Asn-120. 2 disordered regions span residues 247-272 and 308-366; these read PGAA…SLGF and TEVV…KKSR. Residues 321 to 333 show a composition bias toward pro residues; it reads GPPPPPPPPPPSG. Basic residues predominate over residues 345–366; that stretch reads GRRRRRTAFASRHGKRHGKKSR. Disulfide bonds link Cys-369-Cys-435, Cys-398-Cys-467, and Cys-402-Cys-469.

It belongs to the TGF-beta family. As to quaternary structure, homodimer; disulfide-linked.

The protein localises to the secreted. Functionally, growth factor that controls proliferation and cellular differentiation in the retina and bone formation. Plays a key role in regulating apoptosis during retinal development. Establishes dorsal-ventral positional information in the retina and controls the formation of the retinotectal map. Required for normal formation of bones and joints in the limbs, skull, digits and axial skeleton. Plays a key role in establishing boundaries between skeletal elements during development. Regulation of GDF6 expression seems to be a mechanism for evolving species-specific changes in skeletal structures. Seems to positively regulate differentiation of chondrogenic tissue through the growth factor receptors subunits BMPR1A, BMPR1B, BMPR2 and ACVR2A, leading to the activation of SMAD1-SMAD5-SMAD8 complex. The regulation of chondrogenic differentiation is inhibited by NOG. Also involved in the induction of adipogenesis from mesenchymal stem cells. This mechanism acts through the growth factor receptors subunits BMPR1A, BMPR2 and ACVR2A and the activation of SMAD1-SMAD5-SMAD8 complex and MAPK14/p38. The sequence is that of Growth/differentiation factor 6 (GDF6) from Bos taurus (Bovine).